A 77-amino-acid chain; its full sequence is Secapin (77 aa).

Positions Met-1–Ala-32 are cleaved as a signal peptide. A propeptide spanning residues Val-33 to Arg-52 is cleaved from the precursor. Residues Cys-61 and Cys-72 are joined by a disulfide bond.

Belongs to the secapin family. In terms of tissue distribution, expressed by the venom gland.

It is found in the secreted. Nontoxic peptide. In Vespa magnifica (Hornet), this protein is Secapin.